The sequence spans 545 residues: Methionine--tRNA ligase (545 aa).

Positions 15 to 25 match the 'HIGH' region motif; it reads PYANGPIHLGH. 4 residues coordinate Zn(2+): Cys-146, Cys-149, Cys-159, and Cys-162. A 'KMSKS' region motif is present at residues 332-336; it reads KMSKS. Lys-335 contacts ATP.

It belongs to the class-I aminoacyl-tRNA synthetase family. MetG type 1 subfamily. In terms of assembly, monomer. Requires Zn(2+) as cofactor.

The protein localises to the cytoplasm. It catalyses the reaction tRNA(Met) + L-methionine + ATP = L-methionyl-tRNA(Met) + AMP + diphosphate. Its function is as follows. Is required not only for elongation of protein synthesis but also for the initiation of all mRNA translation through initiator tRNA(fMet) aminoacylation. The polypeptide is Methionine--tRNA ligase (Hamiltonella defensa subsp. Acyrthosiphon pisum (strain 5AT)).